Consider the following 373-residue polypeptide: MLDIFRGLKSLVKISHVNTDSPVFRLHYSITVIILMSFSLIVTTRQYVGNPIDCVHTKDIPADVLNTYCWIHSTFALKSLFLKEVGKDVPYPGVGNSAEATAADKKIYKYYQWVCFCLFFQAILFYTPRWLWKSWEGGKIHALMMDLDIGICSEIEKKQKKKLLLDYLWDNLRYHNWWAYRYYVCEFLSLCNVIGQMFLMNRFFDGEFMTFGLDVITHMEADQEDRMDPMIYIFPRMTKCTFYKYGVSGEVERHDAICILPLNVVNEKIYIFLWFWFIILTILTTLTIFYRIIIIFSPRMRVYLLRLRFRLVRRDAIEIIVRRSKMGDWFLLYRLGENLDSIIFRDVMQDLANRLHNNQHHRVPGMKGEIQDA.

Residues 1–21 (MLDIFRGLKSLVKISHVNTDS) are Cytoplasmic-facing. Residues 22–42 (PVFRLHYSITVIILMSFSLIV) traverse the membrane as a helical segment. Residues 43 to 106 (TTRQYVGNPI…SAEATAADKK (64 aa)) lie on the Extracellular side of the membrane. Residues 107 to 127 (IYKYYQWVCFCLFFQAILFYT) form a helical membrane-spanning segment. Topologically, residues 128 to 176 (PRWLWKSWEGGKIHALMMDLDIGICSEIEKKQKKKLLLDYLWDNLRYHN) are cytoplasmic. Residues 177-199 (WWAYRYYVCEFLSLCNVIGQMFL) traverse the membrane as a helical segment. Residues 200–268 (MNRFFDGEFM…ILPLNVVNEK (69 aa)) are Extracellular-facing. The helical transmembrane segment at 269–289 (IYIFLWFWFIILTILTTLTIF) threads the bilayer. Residues 290–373 (YRIIIIFSPR…PGMKGEIQDA (84 aa)) are Cytoplasmic-facing.

The protein belongs to the pannexin family. Monomer.

The protein localises to the cell membrane. It is found in the cell junction. The protein resides in the gap junction. Structural component of the gap junctions at electrical synapses in distal and mid-depth levels in the lamina. In Anopheles gambiae (African malaria mosquito), this protein is Innexin shaking-B.